Here is a 435-residue protein sequence, read N- to C-terminus: Monodehydroascorbate reductase 2 (435 aa).

Residues 14–17, E41, R48, K53, I96, and 147–148 contribute to the FAD site; these read GGVA and RE. Residues 172–178, E196, R202, and G261 each bind NAD(+); that span reads GGYIGLE. 174–178 is a binding site for NADP(+); the sequence is YIGLE. Positions 202 and 261 each coordinate NADP(+). D298 provides a ligand contact to FAD. Residue 314–315 participates in NAD(+) binding; that stretch reads EH. NADP(+) is bound at residue 314 to 315; the sequence is EH. V316 is an FAD binding site. L-ascorbate is bound at residue R320. Y349 contributes to the FAD binding site. Position 349 (Y349) interacts with NAD(+). Position 349 (Y349) interacts with NADP(+). R351 contacts L-ascorbate. S417 carries the phosphoserine modification.

The protein belongs to the FAD-dependent oxidoreductase family. The cofactor is FAD.

It is found in the cytoplasm. It catalyses the reaction 2 monodehydro-L-ascorbate radical + NADH + H(+) = 2 L-ascorbate + NAD(+). Its function is as follows. Catalyzes the conversion of monodehydroascorbate to ascorbate, oxidizing NADH in the process. The chain is Monodehydroascorbate reductase 2 from Arabidopsis thaliana (Mouse-ear cress).